The sequence spans 601 residues: DNA ligase 2 (601 aa).

Glu263 provides a ligand contact to ATP. The N6-AMP-lysine intermediate role is filled by Lys265. The ATP site is built by Arg270, Arg285, Glu314, Phe354, Arg432, and Lys438.

This sequence belongs to the ATP-dependent DNA ligase family. Mg(2+) serves as cofactor.

It catalyses the reaction ATP + (deoxyribonucleotide)n-3'-hydroxyl + 5'-phospho-(deoxyribonucleotide)m = (deoxyribonucleotide)n+m + AMP + diphosphate.. In terms of biological role, DNA ligase that seals nicks in double-stranded DNA during DNA replication, DNA recombination and DNA repair. The chain is DNA ligase 2 from Thermofilum pendens (strain DSM 2475 / Hrk 5).